A 580-amino-acid polypeptide reads, in one-letter code: Glyco-Gag protein (580 aa).

At 1–51 (MSGASSGTAIGAHLFGVSPEYRVLIGDGGAGPSKSLSEVSFSVWYRSRAAR) the chain is on the cytoplasmic side. Residues 52–72 (LVILCLVASFLVPCLTFLIAE) traverse the membrane as a helical segment. The Extracellular segment spans residues 73–580 (AVMGQTVTTP…ANSTLLNLED (508 aa)). A glycan (N-linked (GlcNAc...) asparagine; by host) is linked at Asn-134. 3 disordered regions span residues 171–282 (VRPF…NRPQ), 491–514 (ETPEEREERLWQRQEERDKKRHKE), and 560–580 (RDCPKRPRKKPANSTLLNLED). Over residues 174-193 (FLPPPKPPTPLPQPLSPQPS) the composition is skewed to pro residues. A compositionally biased stretch (low complexity) spans 194-203 (APLTSSLYPV). 2 stretches are compositionally biased toward pro residues: residues 204-220 (VPKPDPPKPPVLPPDPS) and 230-245 (EPPPYPGGHGPPPSGP). Over residues 491 to 508 (ETPEEREERLWQRQEERD) the composition is skewed to basic and acidic residues. Polar residues predominate over residues 571-580 (ANSTLLNLED). N-linked (GlcNAc...) asparagine; by host glycosylation is present at Asn-572.

In terms of processing, glycosylated by host. Post-translationally, cleaved by host near the middle of the molecule, releasing the c-terminal half containing capsid and nucleoprotein domains op GAG.

It localises to the host cell membrane. Its function is as follows. Plays a role in viral particle release. Presumably acts by facilitating the fission of the virion bud at the cell surface. The sequence is that of Glyco-Gag protein from Feline leukemia virus.